The chain runs to 228 residues: L-ornithine N5-acetyltransferase NATA1 (228 aa).

Positions 1–21 (MAPPTAAPEPNTVPETSPTGH) are disordered. Positions 77 to 227 (VFLLEISPSP…DALQAIDKLN (151 aa)) constitute an N-acetyltransferase domain. Acetyl-CoA is bound by residues 153–155 (IFM), 161–166 (RKGFGK), 192–195 (NVNA), and tyrosine 199.

It belongs to the acetyltransferase family.

Its function is as follows. Acetyltransferase that converts ornithine to N5-acetylornithine, which is likely used in plant defense. This is L-ornithine N5-acetyltransferase NATA1 (NATA1) from Arabidopsis thaliana (Mouse-ear cress).